Consider the following 625-residue polypeptide: tRNA uridine 5-carboxymethylaminomethyl modification enzyme MnmG (625 aa).

FAD is bound by residues 13–18, valine 125, and serine 182; that span reads GGGHAG. 276 to 290 serves as a coordination point for NAD(+); sequence GPRYCPSIEDKITRF. FAD is bound at residue glutamine 373.

The protein belongs to the MnmG family. As to quaternary structure, homodimer. Heterotetramer of two MnmE and two MnmG subunits. FAD serves as cofactor.

It localises to the cytoplasm. NAD-binding protein involved in the addition of a carboxymethylaminomethyl (cmnm) group at the wobble position (U34) of certain tRNAs, forming tRNA-cmnm(5)s(2)U34. The protein is tRNA uridine 5-carboxymethylaminomethyl modification enzyme MnmG of Lactococcus lactis subsp. lactis (strain IL1403) (Streptococcus lactis).